We begin with the raw amino-acid sequence, 193 residues long: Adenine phosphoribosyltransferase (193 aa).

This sequence belongs to the purine/pyrimidine phosphoribosyltransferase family. In terms of assembly, homodimer.

It is found in the cytoplasm. The catalysed reaction is AMP + diphosphate = 5-phospho-alpha-D-ribose 1-diphosphate + adenine. Its pathway is purine metabolism; AMP biosynthesis via salvage pathway; AMP from adenine: step 1/1. In terms of biological role, catalyzes a salvage reaction resulting in the formation of AMP, that is energically less costly than de novo synthesis. The protein is Adenine phosphoribosyltransferase of Bifidobacterium animalis subsp. lactis (strain AD011).